The chain runs to 507 residues: ATP synthase subunit alpha 2 (507 aa).

An ATP-binding site is contributed by 171–178 (GDRATGKT).

It belongs to the ATPase alpha/beta chains family. As to quaternary structure, F-type ATPases have 2 components, CF(1) - the catalytic core - and CF(0) - the membrane proton channel. CF(1) has five subunits: alpha(3), beta(3), gamma(1), delta(1), epsilon(1). CF(0) has three main subunits: a(1), b(2) and c(9-12). The alpha and beta chains form an alternating ring which encloses part of the gamma chain. CF(1) is attached to CF(0) by a central stalk formed by the gamma and epsilon chains, while a peripheral stalk is formed by the delta and b chains.

It localises to the cell inner membrane. The enzyme catalyses ATP + H2O + 4 H(+)(in) = ADP + phosphate + 5 H(+)(out). In terms of biological role, produces ATP from ADP in the presence of a proton gradient across the membrane. The alpha chain is a regulatory subunit. This chain is ATP synthase subunit alpha 2, found in Gluconobacter oxydans (strain 621H) (Gluconobacter suboxydans).